The chain runs to 215 residues: Probable phosphoglycerate mutase GpmB (215 aa).

Substrate contacts are provided by residues 8 to 15, 21 to 22, Arg58, Arg60, 82 to 85, and 151 to 152; these read RHGETEWN, QG, ELHM, and GI. Catalysis depends on His9, which acts as the Tele-phosphohistidine intermediate. Glu82 acts as the Proton donor/acceptor in catalysis.

Belongs to the phosphoglycerate mutase family. GpmB subfamily.

The catalysed reaction is (2R)-2-phosphoglycerate = (2R)-3-phosphoglycerate. The protein operates within carbohydrate degradation; glycolysis; pyruvate from D-glyceraldehyde 3-phosphate: step 3/5. The polypeptide is Probable phosphoglycerate mutase GpmB (Serratia proteamaculans (strain 568)).